A 137-amino-acid chain; its full sequence is Basic phospholipase A2 homolog bothropstoxin-I (137 aa).

The N-terminal stretch at 1-16 is a signal peptide; sequence MRTLWIMAVLLVGVEG. Disulfide bonds link Cys-42/Cys-131, Cys-44/Cys-60, Cys-59/Cys-111, Cys-65/Cys-137, Cys-66/Cys-104, Cys-73/Cys-97, and Cys-91/Cys-102. The segment at 121–133 is important for membrane-damaging activities in eukaryotes and bacteria; heparin-binding; the sequence is KKYRYHLKPFCKK.

Belongs to the phospholipase A2 family. Group II subfamily. K49 sub-subfamily. Homodimer; non-covalently linked (probable alternative/compact dimer conformation in solution). Binds to heparin. In terms of tissue distribution, expressed by the venom gland.

Its subcellular location is the secreted. With respect to regulation, suramin inhibits both myotoxic and muscle-paralyzing activities. Chicoric acid inhibits myotoxic activity. Zinc ions inhibits the myotoxic activity and the neuromuscular blockade. Heparin inhibits myotoxic activity. In terms of biological role, snake venom phospholipase A2 homolog that lacks enzymatic activity. Shows local myotoxic activity. Induces inflammation, since it induces edema and leukocytes infiltration. In addition, it induces NLRP3 NLRP3, ASC (PYCARD), caspase-1 (CASP1), and IL-1beta (IL1B) gene expression in the gastrocnemius muscle, showing that it is able to activate NLRP3 inflammasome. It also damages artificial and myoblast membranes by a calcium-independent mechanism, has bactericidal activity, and induces neuromuscular blockade. A model of myotoxic mechanism has been proposed: an apo Lys49-PLA2 is activated by the entrance of a hydrophobic molecule (e.g. fatty acid) at the hydrophobic channel of the protein leading to a reorientation of a monomer. This reorientation causes a transition between 'inactive' to 'active' states, causing alignment of C-terminal and membrane-docking sites (MDoS) side-by-side and putting the membrane-disruption sites (MDiS) in the same plane, exposed to solvent and in a symmetric position for both monomers. The MDoS region stabilizes the toxin on membrane by the interaction of charged residues with phospholipid head groups. Subsequently, the MDiS region destabilizes the membrane with penetration of hydrophobic residues. This insertion causes a disorganization of the membrane, allowing an uncontrolled influx of ions (i.e. calcium and sodium), and eventually triggering irreversible intracellular alterations and cell death. The polypeptide is Basic phospholipase A2 homolog bothropstoxin-I (Bothrops jararacussu (Jararacussu)).